Reading from the N-terminus, the 101-residue chain is Protein S100-A7A (101 aa).

2 EF-hand domains span residues 13–48 and 50–85; these read MIDMFHKYTGRDGKIEKPSLLTMMKENFPNFLSACD and KGIHYLATVFEKKDKNEDKKIDFSEFLSLLGDIAAD. Residues His18, Glu28, and Glu38 each coordinate Zn(2+). Positions 63 and 65 each coordinate Ca(2+). Zn(2+) is bound at residue Glu66. Ca(2+)-binding residues include Asp67, Lys69, and Glu74. Zn(2+) contacts are provided by His87 and His91.

The protein belongs to the S-100 family. As to expression, overexpressed in psoriasis.

Its subcellular location is the cytoplasm. Functionally, may be involved in epidermal differentiation and inflammation and might therefore be important for the pathogenesis of psoriasis and other diseases. The polypeptide is Protein S100-A7A (S100A7A) (Homo sapiens (Human)).